Here is a 435-residue protein sequence, read N- to C-terminus: UDP-N-acetylmuramate--L-alanine ligase (435 aa).

Residue 108-114 (GSHGKTS) coordinates ATP.

The protein belongs to the MurCDEF family.

It localises to the cytoplasm. It carries out the reaction UDP-N-acetyl-alpha-D-muramate + L-alanine + ATP = UDP-N-acetyl-alpha-D-muramoyl-L-alanine + ADP + phosphate + H(+). It functions in the pathway cell wall biogenesis; peptidoglycan biosynthesis. Cell wall formation. This is UDP-N-acetylmuramate--L-alanine ligase from Exiguobacterium sp. (strain ATCC BAA-1283 / AT1b).